The chain runs to 804 residues: Phosphatidylinositol 4-kinase beta (804 aa).

The 191-residue stretch at 55-245 folds into the PIK helical domain; the sequence is LEKVKMIHGS…GTKLRKLILS (191 aa). 2 disordered regions span residues 69-122 and 251-309; these read LDKV…ARRR and AHKK…EPVR. Composition is skewed to polar residues over residues 91 to 103 and 281 to 300; these read KLTN…TSSR and DATV…SNPK. The 267-residue stretch at 523 to 789 folds into the PI3K/PI4K catalytic domain; sequence EPWEEKVRRI…MVDGSMRSIT (267 aa). Positions 529–535 are G-loop; it reads VRRIREG. Residues 656–664 are catalytic loop; it reads QVKDRHNGN. Residues 675–699 form an activation loop region; sequence HIDFGFILSSSPRNLGFETSAFKLT.

Belongs to the PI3/PI4-kinase family. Type III PI4K subfamily. The cofactor is Mg(2+). Mn(2+) serves as cofactor.

The protein localises to the endomembrane system. Its subcellular location is the mitochondrion outer membrane. It is found in the rough endoplasmic reticulum membrane. The catalysed reaction is a 1,2-diacyl-sn-glycero-3-phospho-(1D-myo-inositol) + ATP = a 1,2-diacyl-sn-glycero-3-phospho-(1D-myo-inositol 4-phosphate) + ADP + H(+). Phosphorylates phosphatidylinositol (PI) in the first committed step in the production of the second messenger inositol-1,4,5,-trisphosphate (PIP). May play an important role in the inner ear development. In Xenopus laevis (African clawed frog), this protein is Phosphatidylinositol 4-kinase beta (pi4kb).